Consider the following 129-residue polypeptide: Glycine cleavage system H protein (129 aa).

Positions 24 to 106 (IAVIGISAYA…YEQGWLLKVQ (83 aa)) constitute a Lipoyl-binding domain. Lysine 65 carries the post-translational modification N6-lipoyllysine.

The protein belongs to the GcvH family. The glycine cleavage system is composed of four proteins: P, T, L and H. It depends on (R)-lipoate as a cofactor.

In terms of biological role, the glycine cleavage system catalyzes the degradation of glycine. The H protein shuttles the methylamine group of glycine from the P protein to the T protein. The chain is Glycine cleavage system H protein from Synechococcus elongatus (strain ATCC 33912 / PCC 7942 / FACHB-805) (Anacystis nidulans R2).